The primary structure comprises 262 residues: Phosphatidylserine decarboxylase proenzyme (262 aa).

Active-site charge relay system; for autoendoproteolytic cleavage activity residues include Asp-86, His-142, and Ser-226. Catalysis depends on Ser-226, which acts as the Schiff-base intermediate with substrate; via pyruvic acid; for decarboxylase activity. Residue Ser-226 is modified to Pyruvic acid (Ser); by autocatalysis.

This sequence belongs to the phosphatidylserine decarboxylase family. PSD-B subfamily. Prokaryotic type I sub-subfamily. As to quaternary structure, heterodimer of a large membrane-associated beta subunit and a small pyruvoyl-containing alpha subunit. It depends on pyruvate as a cofactor. Post-translationally, is synthesized initially as an inactive proenzyme. Formation of the active enzyme involves a self-maturation process in which the active site pyruvoyl group is generated from an internal serine residue via an autocatalytic post-translational modification. Two non-identical subunits are generated from the proenzyme in this reaction, and the pyruvate is formed at the N-terminus of the alpha chain, which is derived from the carboxyl end of the proenzyme. The autoendoproteolytic cleavage occurs by a canonical serine protease mechanism, in which the side chain hydroxyl group of the serine supplies its oxygen atom to form the C-terminus of the beta chain, while the remainder of the serine residue undergoes an oxidative deamination to produce ammonia and the pyruvoyl prosthetic group on the alpha chain. During this reaction, the Ser that is part of the protease active site of the proenzyme becomes the pyruvoyl prosthetic group, which constitutes an essential element of the active site of the mature decarboxylase.

The protein resides in the cell membrane. The catalysed reaction is a 1,2-diacyl-sn-glycero-3-phospho-L-serine + H(+) = a 1,2-diacyl-sn-glycero-3-phosphoethanolamine + CO2. The protein operates within phospholipid metabolism; phosphatidylethanolamine biosynthesis; phosphatidylethanolamine from CDP-diacylglycerol: step 2/2. In terms of biological role, catalyzes the formation of phosphatidylethanolamine (PtdEtn) from phosphatidylserine (PtdSer). This is Phosphatidylserine decarboxylase proenzyme from Bacillus cereus (strain ATCC 10987 / NRS 248).